A 365-amino-acid chain; its full sequence is Chorismate synthase (365 aa).

Arginine 47 provides a ligand contact to NADP(+). FMN contacts are provided by residues 124 to 126 (RAS), glycine 287, 302 to 306 (KPTAT), and arginine 328. The segment at 266 to 290 (FIKSDDSSKLRTTSNNSGGIQGGIS) is disordered.

Belongs to the chorismate synthase family. In terms of assembly, homotetramer. The cofactor is FMNH2.

The enzyme catalyses 5-O-(1-carboxyvinyl)-3-phosphoshikimate = chorismate + phosphate. Its pathway is metabolic intermediate biosynthesis; chorismate biosynthesis; chorismate from D-erythrose 4-phosphate and phosphoenolpyruvate: step 7/7. Its function is as follows. Catalyzes the anti-1,4-elimination of the C-3 phosphate and the C-6 proR hydrogen from 5-enolpyruvylshikimate-3-phosphate (EPSP) to yield chorismate, which is the branch point compound that serves as the starting substrate for the three terminal pathways of aromatic amino acid biosynthesis. This reaction introduces a second double bond into the aromatic ring system. The protein is Chorismate synthase of Prochlorococcus marinus (strain MIT 9301).